The chain runs to 656 residues: Receptor-type tyrosine-protein phosphatase R (656 aa).

An N-terminal signal peptide occupies residues 1–23 (MRRAVGFPALCLLLNLHAAGCFS). O-linked (Xyl...) (chondroitin sulfate) serine glycosylation occurs at serine 23. Over 24 to 226 (RNNDHFLAIR…EADKIWSKEG (203 aa)) the chain is Extracellular. N-linked (GlcNAc...) asparagine glycosylation is present at asparagine 128. The helical transmembrane segment at 227-247 (FYAVVIFLSIFIIIVTCLMII) threads the bilayer. The Cytoplasmic portion of the chain corresponds to 248-656 (YRLKERLQLS…ESRLSPETVE (409 aa)). Residues 269-289 (HLSPIARQQAQSEAKTTHSMV) are disordered. The residue at position 271 (serine 271) is a Phosphoserine. The segment covering 274–289 (ARQQAQSEAKTTHSMV) has biased composition (polar residues). Position 338 is a phosphoserine; by PKA (serine 338). A Tyrosine-protein phosphatase domain is found at 392 to 646 (LQSEFMEIPM…EFVHHALCLF (255 aa)). Residues aspartate 553, 587 to 593 (CSAGIGR), and glutamine 631 each bind substrate. The Phosphocysteine intermediate role is filled by cysteine 587.

Belongs to the protein-tyrosine phosphatase family. Receptor class 7 subfamily. As to quaternary structure, interacts with MAPKs. Expressed in the heart, brain, spleen, lung, liver, skeletal muscle, kidney and testis. Isoform alpha is expressed throughout the granular layer of the cerebellar but not within the Purkinje cells, also in the villi of the ileum and jejunum and both the villi and crypts of the duodenum. Isoform beta is expressed only in the Purkinje cells. Isoform gamma is expressed throughout the brain, the villi and crypts of the duodenum, jejunum and ileum and expressed at low levels in the proximal colon.

The protein localises to the cell membrane. The protein resides in the cytoplasm. The enzyme catalyses O-phospho-L-tyrosyl-[protein] + H2O = L-tyrosyl-[protein] + phosphate. Functionally, sequesters mitogen-activated protein kinases (MAPKs) such as MAPK1, MAPK3 and MAPK14 in the cytoplasm in an inactive form. The MAPKs bind to a dephosphorylated kinase interacting motif, phosphorylation of which by the protein kinase A complex releases the MAPKs for activation and translocation into the nucleus. Isoform gamma may have a role in patterning and cellular proliferation of skeletal elements in the precartilaginous/cartilaginous skeleton. This Mus musculus (Mouse) protein is Receptor-type tyrosine-protein phosphatase R (Ptprr).